The following is a 654-amino-acid chain: Cytochrome B pre-mRNA-processing protein 1 (654 aa).

Its subcellular location is the mitochondrion. Responsible for conferring a stable 5'-end on cytochrome b mRNA. This Saccharomyces cerevisiae (strain ATCC 204508 / S288c) (Baker's yeast) protein is Cytochrome B pre-mRNA-processing protein 1 (CBP1).